We begin with the raw amino-acid sequence, 967 residues long: MSDTAEKLDYSTTLYLPQTDFPMRAGLPQKEPETVKRWQDMGLYKKLRASAAGREKFVLHDGPPYANGNIHIGHALNKILKDVITRSFQMRGFDANYVPGWDCHGLPIEWKIEEAYRARGKNKDEVPVNEFRKECRDFAAGWIKVQSEEFKRLGIEGDFENPYTTMNFHAEARIAGELLKIARSGQLYRGSKPIMWSVVERTALAEAEVEYHDVESDMIWVKFPVKDAAPALSGVSVVIWTTTPWTIPGNRAIAFSSRVEYGLFEVESAQNDFGPQTGEKLIFARKLADEAAAKAKLTFKFVRDVKSEELAAITCAHPLASLGYDFPVPLLDGDHVTDDAGTGFVHTAPSHGREDFDAWTNSVRTLEARGIDTKIPFPVDDAGFYTEDAPGFGPSAEGGAARVMDDNGKKGDANERVIKALIAANNLFARGRLKHSYPHSWRSKKPVIFRNTPQWFVYMDKELGDGTTLRSRSLDAIDQTRFVPASGQNRLRAMIEGRPDWVLSRQRSWGVPIAVFADEQGEVLVDEAVNARILEAFEAEGADAWFAEGAKERFLGNDHDHAKWQQVMDILDVWFDSGCTHTFTLEDRPDMKWPADVYLEGSDQHRGWFHSSLLESCATRGRAPYNAVVTHGFTMDEQGRKQSKSLGNVVAPQDVMKESGADILRLWVMTTDYWEDQRLGKAIIQTNIDAYRKLRNTVRWMLGTLAHDNGEEIAYADLPELEKLVLHRLSELDKVVRDGYDAFDFKKITRALIDFANVELSAFYFDIRKDTLYCDAPSSLKRRASLSVIAKLFDCLVTWLAPMLPFTTEEAWLSRYPDAESVHLAQFPEIPAEWKNDALEAKWEKIRKVRTVVTGALEVERREKRIGSSLEAAPVVHIADSDLLAALSGQDFAEICITSAITVVGDEGPADGFRLQEVAKVVVEQKLAEGVKCARSWRITTDVGSDPQYPDVSARDAAALRELAALK.

The 'HIGH' region signature appears at 64-74 (PYANGNIHIGH). Glu-600 is an L-isoleucyl-5'-AMP binding site. The 'KMSKS' region motif lies at 641–645 (KQSKS). ATP is bound at residue Lys-644.

This sequence belongs to the class-I aminoacyl-tRNA synthetase family. IleS type 1 subfamily. In terms of assembly, monomer.

The protein resides in the cytoplasm. It carries out the reaction tRNA(Ile) + L-isoleucine + ATP = L-isoleucyl-tRNA(Ile) + AMP + diphosphate. Functionally, catalyzes the attachment of isoleucine to tRNA(Ile). As IleRS can inadvertently accommodate and process structurally similar amino acids such as valine, to avoid such errors it has two additional distinct tRNA(Ile)-dependent editing activities. One activity is designated as 'pretransfer' editing and involves the hydrolysis of activated Val-AMP. The other activity is designated 'posttransfer' editing and involves deacylation of mischarged Val-tRNA(Ile). The chain is Isoleucine--tRNA ligase from Agrobacterium fabrum (strain C58 / ATCC 33970) (Agrobacterium tumefaciens (strain C58)).